Reading from the N-terminus, the 299-residue chain is Ribosomal RNA small subunit methyltransferase H (299 aa).

S-adenosyl-L-methionine contacts are provided by residues 36-38 (GGH), Asp55, Asp103, and Gln110. Basic and acidic residues-rich tracts occupy residues 268–282 (KPVRPSEEEIRENPR) and 289–299 (RAAERIEKGGD). The interval 268–299 (KPVRPSEEEIRENPRARSGRLRAAERIEKGGD) is disordered.

It belongs to the methyltransferase superfamily. RsmH family.

It localises to the cytoplasm. The catalysed reaction is cytidine(1402) in 16S rRNA + S-adenosyl-L-methionine = N(4)-methylcytidine(1402) in 16S rRNA + S-adenosyl-L-homocysteine + H(+). Functionally, specifically methylates the N4 position of cytidine in position 1402 (C1402) of 16S rRNA. The chain is Ribosomal RNA small subunit methyltransferase H from Thermotoga petrophila (strain ATCC BAA-488 / DSM 13995 / JCM 10881 / RKU-1).